A 76-amino-acid chain; its full sequence is MVCIPCIVIPVLLWIYKKFLEPYIYPLVSPFVSRIWPKKAIQESNDTNKGKVNFKGADMNGLPTKGPTEICDKKKD.

The necessary for its localzation to the endoplasmic reticulum and lipid droplets stretch occupies residues 1–37 (MVCIPCIVIPVLLWIYKKFLEPYIYPLVSPFVSRIWP). A disordered region spans residues 46–76 (DTNKGKVNFKGADMNGLPTKGPTEICDKKKD).

Belongs to the UPF0729 family. Interacts with DERL1 and AMFR. In terms of processing, undergoes ER-associated degradation (ERAD).

It is found in the endoplasmic reticulum. The protein localises to the lipid droplet. Functionally, may activate the NF-kappa-B signaling pathway. This is UPF0729 protein C18orf32 (C18orf32) from Homo sapiens (Human).